The sequence spans 62 residues: Photosystem II reaction center protein Z (62 aa).

2 helical membrane-spanning segments follow: residues 8 to 28 and 41 to 61; these read AVFA…VVFA and FSGT…NSLI.

It belongs to the PsbZ family. PSII is composed of 1 copy each of membrane proteins PsbA, PsbB, PsbC, PsbD, PsbE, PsbF, PsbH, PsbI, PsbJ, PsbK, PsbL, PsbM, PsbT, PsbY, PsbZ, Psb30/Ycf12, at least 3 peripheral proteins of the oxygen-evolving complex and a large number of cofactors. It forms dimeric complexes.

The protein localises to the plastid. Its subcellular location is the chloroplast thylakoid membrane. May control the interaction of photosystem II (PSII) cores with the light-harvesting antenna, regulates electron flow through the 2 photosystem reaction centers. PSII is a light-driven water plastoquinone oxidoreductase, using light energy to abstract electrons from H(2)O, generating a proton gradient subsequently used for ATP formation. The polypeptide is Photosystem II reaction center protein Z (Amborella trichopoda).